We begin with the raw amino-acid sequence, 95 residues long: Co-chaperonin GroES (95 aa).

Belongs to the GroES chaperonin family. In terms of assembly, heptamer of 7 subunits arranged in a ring. Interacts with the chaperonin GroEL.

The protein resides in the cytoplasm. Functionally, together with the chaperonin GroEL, plays an essential role in assisting protein folding. The GroEL-GroES system forms a nano-cage that allows encapsulation of the non-native substrate proteins and provides a physical environment optimized to promote and accelerate protein folding. GroES binds to the apical surface of the GroEL ring, thereby capping the opening of the GroEL channel. This Nitratidesulfovibrio vulgaris (strain DSM 19637 / Miyazaki F) (Desulfovibrio vulgaris) protein is Co-chaperonin GroES.